The following is a 90-amino-acid chain: Large ribosomal subunit protein bL27 (90 aa).

The interval 1 to 22 is disordered; sequence MAHKKSGGSSSNGRDSAGRRLG.

Belongs to the bacterial ribosomal protein bL27 family.

The polypeptide is Large ribosomal subunit protein bL27 (Caulobacter sp. (strain K31)).